The sequence spans 402 residues: NADH-quinone oxidoreductase subunit D (402 aa).

This sequence belongs to the complex I 49 kDa subunit family. NDH-1 is composed of 14 different subunits. Subunits NuoB, C, D, E, F, and G constitute the peripheral sector of the complex.

It localises to the cell inner membrane. It catalyses the reaction a quinone + NADH + 5 H(+)(in) = a quinol + NAD(+) + 4 H(+)(out). Its function is as follows. NDH-1 shuttles electrons from NADH, via FMN and iron-sulfur (Fe-S) centers, to quinones in the respiratory chain. The immediate electron acceptor for the enzyme in this species is believed to be ubiquinone. Couples the redox reaction to proton translocation (for every two electrons transferred, four hydrogen ions are translocated across the cytoplasmic membrane), and thus conserves the redox energy in a proton gradient. The chain is NADH-quinone oxidoreductase subunit D from Rhodopseudomonas palustris (strain TIE-1).